Reading from the N-terminus, the 390-residue chain is Pepsin B (390 aa).

A signal peptide spans 1-16; sequence MKIQVLVLVCLHLSEG. A propeptide spans 17-59 (activation peptide); it reads VERIILKKGKSIRQVMEERGVLETFLRNHPKVDPAAKYLFNND. The Peptidase A1 domain maps to 74–387; sequence YFGEISIGTP…DMAANRVGFA (314 aa). Asp-92 is a catalytic residue. 2 disulfides stabilise this stretch: Cys-105/Cys-110 and Cys-269/Cys-273. Asp-278 is an active-site residue. An intrachain disulfide couples Cys-312 to Cys-345.

Belongs to the peptidase A1 family.

The protein resides in the secreted. The catalysed reaction is Degradation of gelatin, little activity on hemoglobin. Specificity on B chain of insulin more restricted than that of pepsin A. Does not cleave 1-Phe-|-Val-2, 4-Gln-|-His-5 or 23-Gly-|-Phe-24.. Its function is as follows. Hydrolyzes various peptides including beta-endorphin, insulin B chain, dynorphin A, and neurokinin A, with high specificity for the cleavage of the Phe-Xaa bonds. This Canis lupus familiaris (Dog) protein is Pepsin B (PGB).